The primary structure comprises 629 residues: tRNA uridine 5-carboxymethylaminomethyl modification enzyme MnmG (629 aa).

14–19 serves as a coordination point for FAD; it reads GAGHAG. Position 274-288 (274-288) interacts with NAD(+); that stretch reads GPRYCPSIEDKVVRF.

The protein belongs to the MnmG family. Homodimer. Heterotetramer of two MnmE and two MnmG subunits. It depends on FAD as a cofactor.

The protein localises to the cytoplasm. Its function is as follows. NAD-binding protein involved in the addition of a carboxymethylaminomethyl (cmnm) group at the wobble position (U34) of certain tRNAs, forming tRNA-cmnm(5)s(2)U34. The chain is tRNA uridine 5-carboxymethylaminomethyl modification enzyme MnmG from Xylella fastidiosa (strain 9a5c).